A 311-amino-acid chain; its full sequence is Probable deoxyhypusine synthase (311 aa).

The active-site Nucleophile is the Lys284.

It belongs to the deoxyhypusine synthase family. Requires NAD(+) as cofactor.

It catalyses the reaction [eIF5A protein]-L-lysine + spermidine = [eIF5A protein]-deoxyhypusine + propane-1,3-diamine. Its pathway is protein modification; eIF5A hypusination. Catalyzes the NAD-dependent oxidative cleavage of spermidine and the subsequent transfer of the butylamine moiety of spermidine to the epsilon-amino group of a specific lysine residue of the eIF-5A precursor protein to form the intermediate deoxyhypusine residue. The polypeptide is Probable deoxyhypusine synthase (Sulfolobus acidocaldarius (strain ATCC 33909 / DSM 639 / JCM 8929 / NBRC 15157 / NCIMB 11770)).